A 380-amino-acid chain; its full sequence is O-phospho-L-seryl-tRNA:Cys-tRNA synthase (380 aa).

Residues 86–87 (AR), Asn-192, and 215–217 (SGH) contribute to the pyridoxal 5'-phosphate site. N6-(pyridoxal phosphate)lysine is present on Lys-218.

This sequence belongs to the SepCysS family. Homodimer. Interacts with SepRS. Pyridoxal 5'-phosphate serves as cofactor.

The enzyme catalyses O-phospho-L-seryl-tRNA(Cys) + hydrogen sulfide + H(+) = L-cysteinyl-tRNA(Cys) + phosphate. In terms of biological role, converts O-phospho-L-seryl-tRNA(Cys) (Sep-tRNA(Cys)) to L-cysteinyl-tRNA(Cys) (Cys-tRNA(Cys)). In Methanococcus maripaludis (strain C6 / ATCC BAA-1332), this protein is O-phospho-L-seryl-tRNA:Cys-tRNA synthase.